We begin with the raw amino-acid sequence, 275 residues long: Pyridoxal phosphate homeostasis protein (275 aa).

Residue Ser6 is modified to Phosphoserine. Lys47 carries the N6-(pyridoxal phosphate)lysine modification. A Phosphotyrosine modification is found at Tyr69. The residue at position 125 (Lys125) is an N6-succinyllysine. 2 positions are modified to phosphoserine: Ser226 and Ser244.

The protein belongs to the pyridoxal phosphate-binding protein YggS/PROSC family.

In terms of biological role, pyridoxal 5'-phosphate (PLP)-binding protein, which may be involved in intracellular homeostatic regulation of pyridoxal 5'-phosphate (PLP), the active form of vitamin B6. The chain is Pyridoxal phosphate homeostasis protein from Pongo abelii (Sumatran orangutan).